A 151-amino-acid chain; its full sequence is MTESTTSDVVLTSEQIAGLLPHRYPFALVDRVIAHDPGVSATAIKNVTMNEPQFQGHFPERPLMPGVLIVEAMAQVGGLIVTQMPDLPKGLFVFAGIDGVRFRRPVVPGDQLVIRCELLSLKRKRFGKVKAEATVDGDLACSGELMFSLVD.

The active site involves His57.

Belongs to the thioester dehydratase family. FabZ subfamily.

It is found in the cytoplasm. The catalysed reaction is a (3R)-hydroxyacyl-[ACP] = a (2E)-enoyl-[ACP] + H2O. Its function is as follows. Involved in unsaturated fatty acids biosynthesis. Catalyzes the dehydration of short chain beta-hydroxyacyl-ACPs and long chain saturated and unsaturated beta-hydroxyacyl-ACPs. This Synechococcus sp. (strain CC9605) protein is 3-hydroxyacyl-[acyl-carrier-protein] dehydratase FabZ.